The chain runs to 340 residues: Phosphoribosylformylglycinamidine cyclo-ligase (340 aa).

The protein belongs to the AIR synthase family.

The protein resides in the cytoplasm. It carries out the reaction 2-formamido-N(1)-(5-O-phospho-beta-D-ribosyl)acetamidine + ATP = 5-amino-1-(5-phospho-beta-D-ribosyl)imidazole + ADP + phosphate + H(+). It functions in the pathway purine metabolism; IMP biosynthesis via de novo pathway; 5-amino-1-(5-phospho-D-ribosyl)imidazole from N(2)-formyl-N(1)-(5-phospho-D-ribosyl)glycinamide: step 2/2. This chain is Phosphoribosylformylglycinamidine cyclo-ligase, found in Streptococcus pneumoniae serotype 4 (strain ATCC BAA-334 / TIGR4).